A 513-amino-acid chain; its full sequence is ATP synthase subunit alpha (513 aa).

ATP is bound at residue 169-176 (GDRQTGKT).

The protein belongs to the ATPase alpha/beta chains family. As to quaternary structure, F-type ATPases have 2 components, CF(1) - the catalytic core - and CF(0) - the membrane proton channel. CF(1) has five subunits: alpha(3), beta(3), gamma(1), delta(1), epsilon(1). CF(0) has three main subunits: a(1), b(2) and c(9-12). The alpha and beta chains form an alternating ring which encloses part of the gamma chain. CF(1) is attached to CF(0) by a central stalk formed by the gamma and epsilon chains, while a peripheral stalk is formed by the delta and b chains.

It localises to the cell inner membrane. It carries out the reaction ATP + H2O + 4 H(+)(in) = ADP + phosphate + 5 H(+)(out). Functionally, produces ATP from ADP in the presence of a proton gradient across the membrane. The alpha chain is a regulatory subunit. The polypeptide is ATP synthase subunit alpha (Cupriavidus necator (strain ATCC 17699 / DSM 428 / KCTC 22496 / NCIMB 10442 / H16 / Stanier 337) (Ralstonia eutropha)).